Here is a 251-residue protein sequence, read N- to C-terminus: NADPH-dependent oxidoreductase (251 aa).

This sequence belongs to the flavin oxidoreductase frp family. FMN serves as cofactor.

Functionally, reduces FMN, organic nitro compounds and disulfide DTNB. Involved in maintenance of the cellular redox state and the disulfide stress response. In Staphylococcus aureus (strain MSSA476), this protein is NADPH-dependent oxidoreductase (nfrA).